The chain runs to 441 residues: Deoxyguanosinetriphosphate triphosphohydrolase-like protein (441 aa).

The 192-residue stretch at 59-250 (RLTHSLEVSQ…MELADDTAYA (192 aa)) folds into the HD domain.

Belongs to the dGTPase family. Type 2 subfamily.

This is Deoxyguanosinetriphosphate triphosphohydrolase-like protein from Shewanella loihica (strain ATCC BAA-1088 / PV-4).